The chain runs to 368 residues: MTSTALNTAGYQQQLDEKAERIQNIFEDFETPELEVFASPAEHYRMRAEFRMWHEGEDLYYVMFNQETREKYRVDQFPAASRLINDLMPLLVEALKPSQTLRHKLFQVDFLSTLSGEILVSLLYHRQLDEEWEVEIKKLKQCLNDEGFNLNIIGRARKMKIVADRDYVIEKLNVFDQTLTYKQVENSFTQPNGEVAQKMLEWAVDCTQDSDGDLLELYCGNGNFSLALAKNFERVLATELAKPSVESAQYNIAVNNIDNVQIVRMSAEDFTDAMAGKREFRRLKAQNVDLQSYNCNTIFVDPPRSGMDEGTCRMVQGYERIMYISCNPDTLKENLEILSQTHKITRFALFDQFPYTHHMEAGVLLERK.

Residues glutamine 190, tyrosine 218, asparagine 223, glutamate 239, and aspartate 301 each contribute to the S-adenosyl-L-methionine site. Cysteine 326 (nucleophile) is an active-site residue. The active-site Proton acceptor is glutamate 360.

Belongs to the class I-like SAM-binding methyltransferase superfamily. RNA M5U methyltransferase family. TrmA subfamily.

It carries out the reaction uridine(54) in tRNA + S-adenosyl-L-methionine = 5-methyluridine(54) in tRNA + S-adenosyl-L-homocysteine + H(+). The enzyme catalyses uridine(341) in tmRNA + S-adenosyl-L-methionine = 5-methyluridine(341) in tmRNA + S-adenosyl-L-homocysteine + H(+). Its function is as follows. Dual-specificity methyltransferase that catalyzes the formation of 5-methyluridine at position 54 (m5U54) in all tRNAs, and that of position 341 (m5U341) in tmRNA (transfer-mRNA). In Photobacterium profundum (strain SS9), this protein is tRNA/tmRNA (uracil-C(5))-methyltransferase.